The primary structure comprises 472 residues: Proline--tRNA ligase (472 aa).

Belongs to the class-II aminoacyl-tRNA synthetase family. ProS type 3 subfamily. Homodimer.

The protein localises to the cytoplasm. It catalyses the reaction tRNA(Pro) + L-proline + ATP = L-prolyl-tRNA(Pro) + AMP + diphosphate. Catalyzes the attachment of proline to tRNA(Pro) in a two-step reaction: proline is first activated by ATP to form Pro-AMP and then transferred to the acceptor end of tRNA(Pro). The sequence is that of Proline--tRNA ligase from Ureaplasma parvum serovar 3 (strain ATCC 27815 / 27 / NCTC 11736).